A 95-amino-acid polypeptide reads, in one-letter code: Pancreatic polypeptide prohormone (95 aa).

The N-terminal stretch at 1–29 is a signal peptide; sequence MAAARLCLSLLLLSTCVALLLQPLLGAQG. Residue tyrosine 65 is modified to Tyrosine amide. Positions 89-95 are excised as a propeptide; it reads ELSPLDL.

It belongs to the NPY family.

Its subcellular location is the secreted. Hormone secreted by pancreatic cells that acts as a regulator of pancreatic and gastrointestinal functions probably by signaling through the G protein-coupled receptor NPY4R2. The polypeptide is Pancreatic polypeptide prohormone (Homo sapiens (Human)).